We begin with the raw amino-acid sequence, 354 residues long: MLIFPLINDTSRKIIHIDMDAFFAAVEVRDNPKLKGHPVIIGSDPRLTGGRGVVSTCNYEARKFGVHSAMSSKEAYERCPQGIFISGNYEKYQAVGLQIREIFKRYTDLIEPMSIDEAYLDVTENKLGIKSAVKIAKLIQHDIWNELQLTASAGVSYNKFLAKIASDYEKPHGLTVILPEEAEAFLAPMDIAKFHGVGNKSVEKLHEMGVYTGADLLKIPEMTLIDKFGRFGFDLYRKARGISNSPVKSNRIRKSIGKERTYAKLLYSEEDIKKELTLLAQKVENSLIKHDKKGRTIVLKIRYADFSTLTKRKSLNLATRDKKQIERTAHEIYDSLEEQPRGIRLLGLTVTGFE.

The region spanning 14-198 (IIHIDMDAFF…MDIAKFHGVG (185 aa)) is the UmuC domain. Mg(2+) is bound by residues Asp18 and Asp116. Glu117 is a catalytic residue.

It belongs to the DNA polymerase type-Y family. As to quaternary structure, monomer. The cofactor is Mg(2+).

The protein localises to the cytoplasm. The enzyme catalyses DNA(n) + a 2'-deoxyribonucleoside 5'-triphosphate = DNA(n+1) + diphosphate. Functionally, poorly processive, error-prone DNA polymerase involved in untargeted mutagenesis. Copies undamaged DNA at stalled replication forks, which arise in vivo from mismatched or misaligned primer ends. These misaligned primers can be extended by PolIV. Exhibits no 3'-5' exonuclease (proofreading) activity. May be involved in translesional synthesis, in conjunction with the beta clamp from PolIII. The chain is DNA polymerase IV from Streptococcus gordonii (strain Challis / ATCC 35105 / BCRC 15272 / CH1 / DL1 / V288).